A 101-amino-acid chain; its full sequence is Acylphosphatase (101 aa).

The Acylphosphatase-like domain maps to 15 to 101 (RMYARVYGLV…KGEFEDFETY (87 aa)). Active-site residues include arginine 30 and asparagine 48.

The protein belongs to the acylphosphatase family.

The catalysed reaction is an acyl phosphate + H2O = a carboxylate + phosphate + H(+). This chain is Acylphosphatase (acyP), found in Saccharolobus solfataricus (strain ATCC 35092 / DSM 1617 / JCM 11322 / P2) (Sulfolobus solfataricus).